Consider the following 243-residue polypeptide: Probable transcriptional regulatory protein BPP2422 (243 aa).

Residues 1–21 (MAGHSKWANIQHRKGRQDAKR) are disordered.

The protein belongs to the TACO1 family.

It is found in the cytoplasm. The chain is Probable transcriptional regulatory protein BPP2422 from Bordetella parapertussis (strain 12822 / ATCC BAA-587 / NCTC 13253).